Reading from the N-terminus, the 505-residue chain is MPRRIKIFDTTLRDGEQSPGASMSLEQKIKMASALERLGVDRIEAGFPVSSPVQFEAVQRVSATVKKAEVVGLARCVQRDIDAAYDALRDAAHPMLHIFIATSPLHREYKLKKSKEEILDTVRECLNYGGKGFSRMEFSPEDASRTEPDYLVEVVKTAIECGATSINIPDTVGYAVPKEFGQLISFLVEQVPQFSDGSVDLSVHCHNDLGLALANSLAAVRSGASQVEVTLNGIGERAGNCPMEELIMSLDVRKDMFDVETGIHTEYLYPTGKLLQSITGLLIPRNKPIFGDNVFVHESGIHQHGVLNKRETYEIMKPERIGRSSETIIMGRHSGKHALEDKLSQYNIKLTRQQFEDVFARFTAIADKKKEVYDEDLFSIVGTVLGGVVKGFSLLYFHTFTGNSLIPGATVKVRSEAGEKVASATGDGPVDAVFNAIDECVGINARLKEYIIHAIGSGKDAQGEVKLEVEIEGATYGGKASSTDIIEASAMAYLNAVNRFELRKR.

The 265-residue stretch at 5–269 (IKIFDTTLRD…ETGIHTEYLY (265 aa)) folds into the Pyruvate carboxyltransferase domain. Mn(2+) is bound by residues Asp14, His204, His206, and Asn240. The tract at residues 393–505 (SLLYFHTFTG…AVNRFELRKR (113 aa)) is regulatory domain.

Belongs to the alpha-IPM synthase/homocitrate synthase family. LeuA type 1 subfamily. In terms of assembly, homodimer. Mn(2+) is required as a cofactor.

It localises to the cytoplasm. It carries out the reaction 3-methyl-2-oxobutanoate + acetyl-CoA + H2O = (2S)-2-isopropylmalate + CoA + H(+). It functions in the pathway amino-acid biosynthesis; L-leucine biosynthesis; L-leucine from 3-methyl-2-oxobutanoate: step 1/4. Its function is as follows. Catalyzes the condensation of the acetyl group of acetyl-CoA with 3-methyl-2-oxobutanoate (2-ketoisovalerate) to form 3-carboxy-3-hydroxy-4-methylpentanoate (2-isopropylmalate). In Sediminispirochaeta smaragdinae (strain DSM 11293 / JCM 15392 / SEBR 4228) (Spirochaeta smaragdinae), this protein is 2-isopropylmalate synthase.